We begin with the raw amino-acid sequence, 664 residues long: tRNA uridine 5-carboxymethylaminomethyl modification enzyme MnmG (664 aa).

Residues 14–19 (GGGHSG), Val-126, and Ser-183 contribute to the FAD site. 277–291 (GPRYCPSIEDKIDRF) serves as a coordination point for NAD(+). An FAD-binding site is contributed by Gln-374.

It belongs to the MnmG family. In terms of assembly, homodimer. Heterotetramer of two MnmE and two MnmG subunits. Requires FAD as cofactor.

It is found in the cytoplasm. NAD-binding protein involved in the addition of a carboxymethylaminomethyl (cmnm) group at the wobble position (U34) of certain tRNAs, forming tRNA-cmnm(5)s(2)U34. The sequence is that of tRNA uridine 5-carboxymethylaminomethyl modification enzyme MnmG from Salinibacter ruber (strain DSM 13855 / M31).